A 447-amino-acid polypeptide reads, in one-letter code: Exodeoxyribonuclease 7 large subunit (447 aa).

This sequence belongs to the XseA family. As to quaternary structure, heterooligomer composed of large and small subunits.

The protein localises to the cytoplasm. The enzyme catalyses Exonucleolytic cleavage in either 5'- to 3'- or 3'- to 5'-direction to yield nucleoside 5'-phosphates.. Functionally, bidirectionally degrades single-stranded DNA into large acid-insoluble oligonucleotides, which are then degraded further into small acid-soluble oligonucleotides. The protein is Exodeoxyribonuclease 7 large subunit of Streptococcus mutans serotype c (strain ATCC 700610 / UA159).